A 206-amino-acid polypeptide reads, in one-letter code: Large ribosomal subunit protein uL4 (206 aa).

The tract at residues 43–78 is disordered; the sequence is ARSGNRKQKDREEVHHTTKKPWRQKGTGRARAGMSS. The segment covering 49 to 58 has biased composition (basic and acidic residues); the sequence is KQKDREEVHH. Over residues 59 to 70 the composition is skewed to basic residues; that stretch reads TTKKPWRQKGTG.

This sequence belongs to the universal ribosomal protein uL4 family. In terms of assembly, part of the 50S ribosomal subunit.

Its function is as follows. One of the primary rRNA binding proteins, this protein initially binds near the 5'-end of the 23S rRNA. It is important during the early stages of 50S assembly. It makes multiple contacts with different domains of the 23S rRNA in the assembled 50S subunit and ribosome. Functionally, forms part of the polypeptide exit tunnel. This is Large ribosomal subunit protein uL4 from Herminiimonas arsenicoxydans.